We begin with the raw amino-acid sequence, 184 residues long: Myosin regulatory light chain 1 (184 aa).

A disordered region spans residues 1–29 (MFSSKENSLGAKRAPFSSNTTSSQRVAAQ). Phosphoserine is present on S36. EF-hand domains follow at residues 45–80 (SQIQELKEAFALLDKDGDGNIGREDVKTMLTSLNQD) and 114–149 (SPRNDLLEAFSTFDDTQSGKIPISTMRDALSSMGDR). Ca(2+)-binding residues include D58, D60, D62, N64, and D69.

Binds to myosin II chains myo2 and myo3.

It is found in the cytoplasm. The polypeptide is Myosin regulatory light chain 1 (rlc1) (Schizosaccharomyces pombe (strain 972 / ATCC 24843) (Fission yeast)).